The sequence spans 88 residues: MSQMDRTMQFNFPEDDQRANTRETLITVYQALEEKGYQPINQIVGYLLSGDPAYIPRHNDARNLIRKIERDELLEELVKSYLNDRRED.

It belongs to the UPF0297 family.

The polypeptide is UPF0297 protein EAT1b_2723 (Exiguobacterium sp. (strain ATCC BAA-1283 / AT1b)).